Here is a 308-residue protein sequence, read N- to C-terminus: Cis-prenyltransferase 4, chloroplastic (308 aa).

Residues 1–45 (MAFSLQLQQIFVSYTRFCSQPKSITNPLISLKLPSIHPLAFAQNA) constitute a chloroplast transit peptide. Asp84 is a catalytic residue.

Belongs to the UPP synthase family. The cofactor is Mg(2+). As to expression, widely expressed.

It is found in the plastid. The protein resides in the chloroplast. In terms of biological role, uses neryl diphosphate and geranyl diphosphate to catalyze the cis-prenyl chain elongation and produce polyprenyl diphosphate with a chain of 55 carbons. The polypeptide is Cis-prenyltransferase 4, chloroplastic (Solanum lycopersicum (Tomato)).